Reading from the N-terminus, the 565-residue chain is Phosphomethylpyrimidine synthase (565 aa).

Substrate contacts are provided by residues asparagine 201, methionine 230, tyrosine 259, histidine 295, 315–317 (SRG), 356–359 (DGLR), and glutamate 395. A Zn(2+)-binding site is contributed by histidine 399. Tyrosine 422 contributes to the substrate binding site. Histidine 463 lines the Zn(2+) pocket. Positions 543, 546, and 551 each coordinate [4Fe-4S] cluster.

Belongs to the ThiC family. Homodimer. Requires [4Fe-4S] cluster as cofactor.

The enzyme catalyses 5-amino-1-(5-phospho-beta-D-ribosyl)imidazole + S-adenosyl-L-methionine = 4-amino-2-methyl-5-(phosphooxymethyl)pyrimidine + CO + 5'-deoxyadenosine + formate + L-methionine + 3 H(+). The protein operates within cofactor biosynthesis; thiamine diphosphate biosynthesis. Catalyzes the synthesis of the hydroxymethylpyrimidine phosphate (HMP-P) moiety of thiamine from aminoimidazole ribotide (AIR) in a radical S-adenosyl-L-methionine (SAM)-dependent reaction. This Ehrlichia canis (strain Jake) protein is Phosphomethylpyrimidine synthase.